A 363-amino-acid chain; its full sequence is 2,5-diketocamphane 1,2-monooxygenase 1 (363 aa).

Residues Met-74 and 186–194 contribute to the FMN site; that span reads TGLTKNSSS.

Belongs to the bacterial luciferase oxidoreductase family. Homodimer. Likely forms a loose transient complex with a P.putida flavin reductase that provides the required FMNH(2) to the enzyme.

It carries out the reaction (1R,4R)-bornane-2,5-dione + FMNH2 + O2 = (1R,4R)-5-oxo-1,2-campholide + FMN + H2O + H(+). Its pathway is terpene metabolism; (R)-camphor degradation. In terms of biological role, involved in the degradation and assimilation of (+)-camphor, which allows P.putida strain NCIMB 10007 to grow on this enantiomer of camphor as the sole carbon source. Catalyzes the FMNH(2)-dependent lactonization of 2,5-diketocamphane via a Baeyer-Villiger oxidation to produce the unstable lactone 5-oxo-1,2-campholide with (R,R) configuration, that presumably undergoes spontaneous hydrolysis to form 2-oxo-Delta(3)-4,5,5-trimethylcyclopentenylacetate. Is also able to convert (+)-camphor and norcamphor to the corresponding lactone in vitro. Shows no conversion of (-)-camphor, (+)-fenchone, (-)-fenchone, and (+)-nopinone. Acts only on bicyclic ketones; is not active towards monocyclic ketones, aromatic ketones, the aliphatic 2-decanone, 1-indanone and progesterone. The sequence is that of 2,5-diketocamphane 1,2-monooxygenase 1 from Pseudomonas putida (Arthrobacter siderocapsulatus).